A 400-amino-acid polypeptide reads, in one-letter code: Phosphoglycerate kinase (400 aa).

Substrate is bound by residues 23-25 (DLN), Arg38, 61-64 (HFGR), Arg120, and Arg153. ATP is bound by residues Lys203, Glu325, and 355–358 (GGDT).

Belongs to the phosphoglycerate kinase family. As to quaternary structure, monomer.

It localises to the cytoplasm. The catalysed reaction is (2R)-3-phosphoglycerate + ATP = (2R)-3-phospho-glyceroyl phosphate + ADP. Its pathway is carbohydrate degradation; glycolysis; pyruvate from D-glyceraldehyde 3-phosphate: step 2/5. The polypeptide is Phosphoglycerate kinase (Allorhizobium ampelinum (strain ATCC BAA-846 / DSM 112012 / S4) (Agrobacterium vitis (strain S4))).